A 346-amino-acid polypeptide reads, in one-letter code: Methionine import ATP-binding protein MetN 1 (346 aa).

The 240-residue stretch at 2 to 241 (IELKNVSKVF…PQHVTTKKFV (240 aa)) folds into the ABC transporter domain. ATP is bound at residue 38 to 45 (GYSGAGKS).

It belongs to the ABC transporter superfamily. Methionine importer (TC 3.A.1.24) family. The complex is composed of two ATP-binding proteins (MetN), two transmembrane proteins (MetI) and a solute-binding protein (MetQ).

Its subcellular location is the cell membrane. The catalysed reaction is L-methionine(out) + ATP + H2O = L-methionine(in) + ADP + phosphate + H(+). The enzyme catalyses D-methionine(out) + ATP + H2O = D-methionine(in) + ADP + phosphate + H(+). Part of the ABC transporter complex MetNIQ involved in methionine import. Responsible for energy coupling to the transport system. This chain is Methionine import ATP-binding protein MetN 1, found in Bacillus cereus (strain ZK / E33L).